Consider the following 328-residue polypeptide: Ribosomal RNA small subunit methyltransferase H (328 aa).

S-adenosyl-L-methionine is bound by residues 35–37 (GSH), D60, F87, D113, and Q120.

It belongs to the methyltransferase superfamily. RsmH family.

The protein resides in the cytoplasm. It catalyses the reaction cytidine(1402) in 16S rRNA + S-adenosyl-L-methionine = N(4)-methylcytidine(1402) in 16S rRNA + S-adenosyl-L-homocysteine + H(+). In terms of biological role, specifically methylates the N4 position of cytidine in position 1402 (C1402) of 16S rRNA. The polypeptide is Ribosomal RNA small subunit methyltransferase H (Chlorobium chlorochromatii (strain CaD3)).